A 108-amino-acid chain; its full sequence is MPPKQQLSKAAKAAAALAGGKKSKKKWSKKSMKDRAQHAVILDQEKYDRILKEVPTYRYVSVSVLVDRLKIGGSLARIALRHLEKEGIIKPISKHSKQAIYTRAAASE.

Low complexity predominate over residues 1–20 (MPPKQQLSKAAKAAAALAGG). Residues 1 to 30 (MPPKQQLSKAAKAAAALAGGKKSKKKWSKK) are disordered. Residue Pro-2 is modified to N,N-dimethylproline; by NTM1. Over residues 21–30 (KKSKKKWSKK) the composition is skewed to basic residues.

This sequence belongs to the eukaryotic ribosomal protein eS25 family. In terms of assembly, component of the small ribosomal subunit (SSU). Mature yeast ribosomes consist of a small (40S) and a large (60S) subunit. The 40S small subunit contains 1 molecule of ribosomal RNA (18S rRNA) and 33 different proteins (encoded by 57 genes). The large 60S subunit contains 3 rRNA molecules (25S, 5.8S and 5S rRNA) and 46 different proteins (encoded by 81 genes).

It localises to the cytoplasm. Functionally, component of the ribosome, a large ribonucleoprotein complex responsible for the synthesis of proteins in the cell. The small ribosomal subunit (SSU) binds messenger RNAs (mRNAs) and translates the encoded message by selecting cognate aminoacyl-transfer RNA (tRNA) molecules. The large subunit (LSU) contains the ribosomal catalytic site termed the peptidyl transferase center (PTC), which catalyzes the formation of peptide bonds, thereby polymerizing the amino acids delivered by tRNAs into a polypeptide chain. The nascent polypeptides leave the ribosome through a tunnel in the LSU and interact with protein factors that function in enzymatic processing, targeting, and the membrane insertion of nascent chains at the exit of the ribosomal tunnel. The protein is Small ribosomal subunit protein eS25B of Saccharomyces cerevisiae (strain ATCC 204508 / S288c) (Baker's yeast).